The sequence spans 181 residues: Adenylate kinase (181 aa).

Residue 10-15 (GAGKGT) participates in ATP binding. Residues 30-59 (STGELFRKNIQDGTKLGIEAKRYLDAGDLV) form an NMP region. Residues Thr31, Arg36, 57–59 (DLV), 85–88 (GYPR), and Gln92 contribute to the AMP site. The segment at 126–132 (GRGRADD) is LID. An ATP-binding site is contributed by Arg127. AMP contacts are provided by Arg129 and Arg140. An ATP-binding site is contributed by Gly166.

The protein belongs to the adenylate kinase family. As to quaternary structure, monomer.

The protein localises to the cytoplasm. It carries out the reaction AMP + ATP = 2 ADP. It participates in purine metabolism; AMP biosynthesis via salvage pathway; AMP from ADP: step 1/1. In terms of biological role, catalyzes the reversible transfer of the terminal phosphate group between ATP and AMP. Plays an important role in cellular energy homeostasis and in adenine nucleotide metabolism. The chain is Adenylate kinase from Mycobacterium marinum (strain ATCC BAA-535 / M).